The following is a 538-amino-acid chain: Sucrose transport protein SUT1 (538 aa).

At 1–52 the chain is on the cytoplasmic side; the sequence is MARGSGAGGGGGGGGGGLELSVGVGGGGGARGGGGGEAAAAVETAAPISLGR. Residues 53 to 73 traverse the membrane as a helical segment; the sequence is LILSGMVAGGVQYGWALQLSL. Residues 74–81 are Extracellular-facing; sequence LTPYVQTL. Residues 82-102 form a helical membrane-spanning segment; the sequence is GLSHALTSFMWLCGPIAGMVV. Residues 103–123 lie on the Cytoplasmic side of the membrane; it reads QPCVGLYSDRCTSKWGRRRPY. A helical transmembrane segment spans residues 124-144; the sequence is ILTGCVLICLAVVVIGFSADI. At 145–162 the chain is on the extracellular side; that stretch reads GYAMGDTKEDCSVYHGSR. Residues 163–183 traverse the membrane as a helical segment; the sequence is WHAAIVYVLGFWLLDFSNNTV. Residues 184–198 are Cytoplasmic-facing; it reads QGPARALMADLSGRH. The helical transmembrane segment at 199–219 threads the bilayer; sequence GPGTANSIFCSWMAMGNILGY. At 220-247 the chain is on the extracellular side; that stretch reads SSGSTNNWHKWFPFLKTRACCEACANLK. A helical transmembrane segment spans residues 248–268; the sequence is GAFLVAVIFLSLCLVITLIFA. Residues 269-306 lie on the Cytoplasmic side of the membrane; that stretch reads KEVPFKGNAALPTKSNEPAEPEGTGPLAVLKGFRNLPT. The helical transmembrane segment at 307–327 threads the bilayer; sequence GMPSVLIVTGLTWLSWFPFIL. Residues 328–357 lie on the Extracellular side of the membrane; that stretch reads YDTDWMGREIYHGDPKGTDPQIEAFNQGVR. Residues 358-378 traverse the membrane as a helical segment; the sequence is AGAFGLLLNSIVLGFSSFLIE. Over 379–388 the chain is Cytoplasmic; the sequence is PMCRKVGPRV. The chain crosses the membrane as a helical span at residues 389–409; the sequence is VWVTSNFLVCIAMAATALISF. The Extracellular portion of the chain corresponds to 410–433; sequence WSLKDFHGTVQKAITADKSIKAVC. A helical membrane pass occupies residues 434 to 454; the sequence is LVLFAFLGVPLAVLYSVPFAV. Over 455–470 the chain is Cytoplasmic; that stretch reads TAQLAATRGGGQGLCT. Residues 471-491 traverse the membrane as a helical segment; the sequence is GVLNISIVIPQVVIALGAGPW. Residues 492–499 are Extracellular-facing; the sequence is DELFGKGN. A helical transmembrane segment spans residues 500-520; it reads IPAFGLASGFALIGGVAGIFL. Residues 521–538 are Cytoplasmic-facing; it reads LPKISKRQFRSVSMGGGH.

Belongs to the glycoside-pentoside-hexuronide (GPH) cation symporter transporter (TC 2.A.2.4) family. As to quaternary structure, homodimer.

Its subcellular location is the cell membrane. The protein operates within glycan biosynthesis; sucrose metabolism. Responsible for the transport of sucrose into the cell, with the concomitant uptake of protons (symport system). May also transport other glucosides. May be required for apoplastic phloem sucrose loading in source tissues (e.g. leaves) in order to transport it to sink tissues (e.g. roots, flowers). The protein is Sucrose transport protein SUT1 (SUT1) of Oryza sativa subsp. indica (Rice).